We begin with the raw amino-acid sequence, 380 residues long: Actinidain (380 aa).

The N-terminal stretch at 1–24 is a signal peptide; the sequence is MGLPKSFVSMSLLFFSTLLILSLA. The propeptide at 25–126 is activation peptide; that stretch reads FNAKNLTQRT…NRYEPRVGQV (102 aa). N-linked (GlcNAc...) asparagine glycans are attached at residues Asn-29, Asn-81, and Asn-111. Disulfide bonds link Cys-148/Cys-191, Cys-182/Cys-224, and Cys-282/Cys-332. Cys-151 is a catalytic residue. Active-site residues include His-288 and Asn-308.

This sequence belongs to the peptidase C1 family. Fruit, present in small cells of the outer pericarp of mature fruit, but not large cells.

The enzyme catalyses Specificity close to that of papain.. Cysteine protease responsible for the cleavage of kiwellin into kissper and KiTH. This Actinidia deliciosa (Kiwi) protein is Actinidain.